The following is a 426-amino-acid chain: Enolase (426 aa).

Gln-163 is a binding site for (2R)-2-phosphoglycerate. The active-site Proton donor is the Glu-205. 3 residues coordinate Mg(2+): Asp-242, Glu-285, and Asp-312. (2R)-2-phosphoglycerate contacts are provided by Lys-337, Arg-366, Ser-367, and Lys-388. Catalysis depends on Lys-337, which acts as the Proton acceptor.

Belongs to the enolase family. Mg(2+) serves as cofactor.

The protein localises to the cytoplasm. The protein resides in the secreted. It localises to the cell surface. The catalysed reaction is (2R)-2-phosphoglycerate = phosphoenolpyruvate + H2O. It participates in carbohydrate degradation; glycolysis; pyruvate from D-glyceraldehyde 3-phosphate: step 4/5. Catalyzes the reversible conversion of 2-phosphoglycerate (2-PG) into phosphoenolpyruvate (PEP). It is essential for the degradation of carbohydrates via glycolysis. This Nitrobacter winogradskyi (strain ATCC 25391 / DSM 10237 / CIP 104748 / NCIMB 11846 / Nb-255) protein is Enolase.